The following is a 593-amino-acid chain: MLO-like protein 8 (593 aa).

Topologically, residues Met-1–Thr-46 are extracellular. A helical transmembrane segment spans residues Trp-47–Leu-67. The Cytoplasmic segment spans residues His-68 to Glu-92. Residues Leu-93–Ile-113 form a helical membrane-spanning segment. Topologically, residues Cys-114–His-181 are extracellular. Residues Ile-182–Gly-202 traverse the membrane as a helical segment. Residues Arg-203–Lys-304 lie on the Cytoplasmic side of the membrane. Residues Val-305–Ile-325 form a helical membrane-spanning segment. Residue Asp-326 is a topological domain, extracellular. The chain crosses the membrane as a helical span at residues Gly-327–Thr-347. The Cytoplasmic segment spans residues Lys-348 to His-393. Residues Phe-394–Gly-414 form a helical membrane-spanning segment. Over Ser-415–Val-430 the chain is Extracellular. Residues Ala-431 to Val-451 form a helical membrane-spanning segment. Residues Thr-452–Arg-593 are Cytoplasmic-facing. Positions Glu-465–Ala-486 are calmodulin-binding. The tract at residues Lys-481 to Arg-593 is disordered. Residues Lys-489–Ser-512 show a composition bias toward low complexity. The span at Leu-528 to Asn-539 shows a compositional bias: acidic residues. The span at Thr-567–Ser-579 shows a compositional bias: basic and acidic residues.

Belongs to the MLO family.

It is found in the membrane. May be involved in modulation of pathogen defense and leaf cell death. Activity seems to be regulated by Ca(2+)-dependent calmodulin binding and seems not to require heterotrimeric G proteins. This Arabidopsis thaliana (Mouse-ear cress) protein is MLO-like protein 8 (MLO8).